The chain runs to 344 residues: MASQTPNLECRMYEAKYPEVDMAVMIQVKNIADMGAYVSLLEYNNIEGMILFSELSRRRIRSVSSLIKVGRIEPVMVLRVDKEKGYIDLSKRRVSEEDIQTCEERYNKSKLVHSIMRHVAETLSIDLEDLYVNIGWPLYRRHGHAFEAFKILVTDPDSVLGPLTREIKEVGPDGQEVTKVVPAVTEEVKDALVKNIRRRMTPQPMKIRADIELKCFQFDGVVHIKEAMKNAEAAGNEDCPVKIKLVAPPLYVLTTQTLDKEQGIEILNKAIAACTETIETHKGKLVVKEGARAVSERDEKMLTEHMAKLRLDNEEMSGDEDSGDEEEDTGMGEVDLDAGAGIIE.

The S1 motif domain occupies 21–92 (DMAVMIQVKN…EKGYIDLSKR (72 aa)). A Phosphoserine; by GCN2 modification is found at serine 56. A disordered region spans residues 312–344 (DNEEMSGDEDSGDEEEDTGMGEVDLDAGAGIIE). Over residues 314-336 (EEMSGDEDSGDEEEDTGMGEVDL) the composition is skewed to acidic residues.

The protein belongs to the eIF-2-alpha family. Heterotrimer composed of an alpha, a beta and a gamma chain. In terms of processing, phosphorylated at Ser-56 by GCN2.

In terms of biological role, functions in the early steps of protein synthesis by forming a ternary complex with GTP and initiator tRNA. This complex binds to a 40S ribosomal subunit, followed by mRNA binding to form a 43S pre-initiation complex. Junction of the 60S ribosomal subunit to form the 80S initiation complex is preceded by hydrolysis of the GTP bound to eIF-2 and release of an eIF-2-GDP binary complex. In order for eIF-2 to recycle and catalyze another round of initiation, the GDP bound to eIF-2 must exchange with GTP by way of a reaction catalyzed by eIF-2B. The chain is Eukaryotic translation initiation factor 2 subunit alpha homolog from Arabidopsis thaliana (Mouse-ear cress).